The primary structure comprises 393 residues: MTTYSDKGEKPERGRFLHFHSVTFWVGNAKQAASYYCSKLGFEPLAYKGLETGSREVVSHVVKQGQIVFVFSSALNPWNKEMGDHLVKHGDGVKDIAFEVEDCDYIVQKARERGAKIVREPWVEQDKLGKVKFAVLQTYGDTTHTLVEKMNYTGRFLPGFEAPPFMDPQLSKLPSCSLEIIDHIVGNQPDQEMVSASEWYLKNLQFHRFWSVDDTQVHTEYSSLRSVVVANYEESIKMPINEPAPGKKKSQIQEYVDYNGGAGVQHIALKTKDIITAIRHLRERGVEFLAVPSTYYKQLREKLKMAKIRVKENIDILEELKILVDYDEKGYLLQIFTKPMQDRPTLFLEVIQRHNHQGFGAGNFNSLFKAFEEEQDLRGNLTDMEPNGVVSGM.

Thr2 is subject to N-acetylthreonine. 2 consecutive VOC domains span residues His18–Lys149 and Ile180–Lys338. An N6-succinyllysine modification is found at Lys132. His183 is a Fe cation binding site. A phosphoserine mark is found at Ser211, Ser226, and Ser250. The Fe cation site is built by His266 and Glu349.

This sequence belongs to the 4HPPD family. In terms of assembly, homodimer. Requires Fe cation as cofactor.

Its subcellular location is the cytoplasm. It is found in the endoplasmic reticulum membrane. The protein resides in the golgi apparatus membrane. The enzyme catalyses 3-(4-hydroxyphenyl)pyruvate + O2 = homogentisate + CO2. It participates in amino-acid degradation; L-phenylalanine degradation; acetoacetate and fumarate from L-phenylalanine: step 3/6. Functionally, catalyzes the conversion of 4-hydroxyphenylpyruvic acid to homogentisic acid, one of the steps in tyrosine catabolism. This Bos taurus (Bovine) protein is 4-hydroxyphenylpyruvate dioxygenase (HPD).